Reading from the N-terminus, the 102-residue chain is Large ribosomal subunit protein uL24 (102 aa).

Belongs to the universal ribosomal protein uL24 family. Part of the 50S ribosomal subunit.

In terms of biological role, one of two assembly initiator proteins, it binds directly to the 5'-end of the 23S rRNA, where it nucleates assembly of the 50S subunit. Its function is as follows. One of the proteins that surrounds the polypeptide exit tunnel on the outside of the subunit. In Polynucleobacter asymbioticus (strain DSM 18221 / CIP 109841 / QLW-P1DMWA-1) (Polynucleobacter necessarius subsp. asymbioticus), this protein is Large ribosomal subunit protein uL24.